A 403-amino-acid polypeptide reads, in one-letter code: Lipase lipl-5 (403 aa).

A signal peptide spans Met-1–Gly-18. The N-linked (GlcNAc...) asparagine glycan is linked to Asn-64. Ser-167 (nucleophile) is an active-site residue. An N-linked (GlcNAc...) asparagine glycan is attached at Asn-271. Residues Asp-343 and His-375 each act as charge relay system in the active site.

It belongs to the AB hydrolase superfamily. Lipase family.

It is found in the lysosome lumen. Its subcellular location is the secreted. In terms of biological role, lipase involved in lipid homeostasis. Regulates mitochondrial lipid composition, in particular cardiolipins and coenzyme Q-9 levels, in response to nutrient availability. Does not affect global triglyceride levels in response to nutrient availability. However, in coelomocytes, specifically promotes triglyceride catabolism and lifespan extension in response to nutrient deprivation. This Caenorhabditis elegans protein is Lipase lipl-5.